We begin with the raw amino-acid sequence, 176 residues long: NAD(P)H-quinone oxidoreductase subunit 6, chloroplastic (176 aa).

The next 5 helical transmembrane spans lie at 10-30 (FLLV…VLLP), 32-52 (PIYS…FYIL), 61-81 (AQLL…VMFI), 92-112 (LWTV…VSLI), and 152-172 (FFLP…GAIA).

It belongs to the complex I subunit 6 family. In terms of assembly, NDH is composed of at least 16 different subunits, 5 of which are encoded in the nucleus.

It is found in the plastid. The protein localises to the chloroplast thylakoid membrane. The catalysed reaction is a plastoquinone + NADH + (n+1) H(+)(in) = a plastoquinol + NAD(+) + n H(+)(out). The enzyme catalyses a plastoquinone + NADPH + (n+1) H(+)(in) = a plastoquinol + NADP(+) + n H(+)(out). NDH shuttles electrons from NAD(P)H:plastoquinone, via FMN and iron-sulfur (Fe-S) centers, to quinones in the photosynthetic chain and possibly in a chloroplast respiratory chain. The immediate electron acceptor for the enzyme in this species is believed to be plastoquinone. Couples the redox reaction to proton translocation, and thus conserves the redox energy in a proton gradient. The polypeptide is NAD(P)H-quinone oxidoreductase subunit 6, chloroplastic (ndhG) (Lactuca sativa (Garden lettuce)).